We begin with the raw amino-acid sequence, 241 residues long: Trypsin-1 (241 aa).

An N-terminal signal peptide occupies residues Met1–Val13. A propeptide spans Phe14–Lys19 (activation peptide). The 220-residue stretch at Ile20–Ala239 folds into the Peptidase S1 domain. 6 cysteine pairs are disulfide-bonded: Cys26–Cys155, Cys44–Cys60, Cys128–Cys228, Cys135–Cys201, Cys166–Cys180, and Cys191–Cys215. Catalysis depends on charge relay system residues His59 and Asp103. Catalysis depends on Ser195, which acts as the Charge relay system.

The protein belongs to the peptidase S1 family.

Its subcellular location is the secreted. The protein localises to the extracellular space. The catalysed reaction is Preferential cleavage: Arg-|-Xaa, Lys-|-Xaa.. The protein is Trypsin-1 of Gadus morhua (Atlantic cod).